A 612-amino-acid polypeptide reads, in one-letter code: Sulfite reductase [NADPH] hemoprotein beta-component (612 aa).

The disordered stretch occupies residues 1-26; the sequence is MDDHKPIETPDGPAVDTPGIGARRYE. [4Fe-4S] cluster-binding residues include Cys469, Cys475, Cys514, and Cys518. Cys518 lines the siroheme pocket.

This sequence belongs to the nitrite and sulfite reductase 4Fe-4S domain family. Alpha(8)-beta(8). The alpha component is a flavoprotein, the beta component is a hemoprotein. The cofactor is siroheme. [4Fe-4S] cluster serves as cofactor.

The enzyme catalyses hydrogen sulfide + 3 NADP(+) + 3 H2O = sulfite + 3 NADPH + 4 H(+). The protein operates within sulfur metabolism; hydrogen sulfide biosynthesis; hydrogen sulfide from sulfite (NADPH route): step 1/1. Functionally, component of the sulfite reductase complex that catalyzes the 6-electron reduction of sulfite to sulfide. This is one of several activities required for the biosynthesis of L-cysteine from sulfate. This chain is Sulfite reductase [NADPH] hemoprotein beta-component, found in Methylorubrum extorquens (strain ATCC 14718 / DSM 1338 / JCM 2805 / NCIMB 9133 / AM1) (Methylobacterium extorquens).